A 323-amino-acid polypeptide reads, in one-letter code: Beta-ketoacyl-[acyl-carrier-protein] synthase III (323 aa).

Active-site residues include Cys-112 and His-250. The segment at 251–255 (QANQR) is ACP-binding. Asn-280 is an active-site residue.

Belongs to the thiolase-like superfamily. FabH family. In terms of assembly, homodimer.

It is found in the cytoplasm. It carries out the reaction malonyl-[ACP] + acetyl-CoA + H(+) = 3-oxobutanoyl-[ACP] + CO2 + CoA. Its pathway is lipid metabolism; fatty acid biosynthesis. Functionally, catalyzes the condensation reaction of fatty acid synthesis by the addition to an acyl acceptor of two carbons from malonyl-ACP. Catalyzes the first condensation reaction which initiates fatty acid synthesis and may therefore play a role in governing the total rate of fatty acid production. Possesses both acetoacetyl-ACP synthase and acetyl transacylase activities. Its substrate specificity determines the biosynthesis of branched-chain and/or straight-chain of fatty acids. The chain is Beta-ketoacyl-[acyl-carrier-protein] synthase III from Oenococcus oeni (strain ATCC BAA-331 / PSU-1).